Here is a 2198-residue protein sequence, read N- to C-terminus: RNA-directed RNA polymerase L (2198 aa).

Positions 26–284 (KEALLSQVEV…AHSDSLAPEC (259 aa)) are endonuclease. 3 residues coordinate Mn(2+): Glu51, Asp89, and Glu102. Lys115 is a catalytic residue. The RdRp catalytic domain maps to 1161–1359 (CDMKMAVNNG…FLSSKFNKFV (199 aa)). Mg(2+) is bound at residue Asp1319.

The protein belongs to the Bunyavirales RNA polymerase family. As to quaternary structure, homomultimer; the oligomeric structure is essential for the polymerase activity. Interacts with nucleoprotein N. Interacts with protein Z; this interaction inhibits viral transcription and replication, Z partially blocks the product exit tunnel for the releasing nascent RNA product. It depends on Mn(2+) as a cofactor. Mg(2+) serves as cofactor.

It is found in the virion. It localises to the host cytoplasm. It carries out the reaction RNA(n) + a ribonucleoside 5'-triphosphate = RNA(n+1) + diphosphate. In terms of biological role, RNA-dependent RNA polymerase, which is responsible for the replication and transcription of the viral RNA genome using antigenomic RNA as an intermediate. During transcription, synthesizes subgenomic RNAs and assures their capping by a cap-snatching mechanism, which involves the endonuclease activity cleaving the host capped pre-mRNAs. These short capped RNAs are then used as primers for viral transcription. The 3'-end of subgenomic mRNAs molecules are heterogeneous and not polyadenylated. The replicase function is to direct synthesis of antigenomic and genomic RNA which are encapsidated and non capped. As a consequence of the use of the same enzyme for both transcription and replication, these mechanisms need to be well coordinated. These processes may be regulated by proteins N and Z in a dose-dependent manner. Z protein inhibits the viral polymerase L und thus the viral transcription and RNA synthesis. In Homo sapiens (Human), this protein is RNA-directed RNA polymerase L.